Consider the following 99-residue polypeptide: Aspartyl/glutamyl-tRNA(Asn/Gln) amidotransferase subunit C (99 aa).

This sequence belongs to the GatC family. As to quaternary structure, heterotrimer of A, B and C subunits.

The catalysed reaction is L-glutamyl-tRNA(Gln) + L-glutamine + ATP + H2O = L-glutaminyl-tRNA(Gln) + L-glutamate + ADP + phosphate + H(+). It carries out the reaction L-aspartyl-tRNA(Asn) + L-glutamine + ATP + H2O = L-asparaginyl-tRNA(Asn) + L-glutamate + ADP + phosphate + 2 H(+). Allows the formation of correctly charged Asn-tRNA(Asn) or Gln-tRNA(Gln) through the transamidation of misacylated Asp-tRNA(Asn) or Glu-tRNA(Gln) in organisms which lack either or both of asparaginyl-tRNA or glutaminyl-tRNA synthetases. The reaction takes place in the presence of glutamine and ATP through an activated phospho-Asp-tRNA(Asn) or phospho-Glu-tRNA(Gln). The sequence is that of Aspartyl/glutamyl-tRNA(Asn/Gln) amidotransferase subunit C from Ralstonia pickettii (strain 12J).